A 98-amino-acid chain; its full sequence is uncharacterized protein (98 aa).

2 consecutive transmembrane segments (helical) span residues 2–22 (IVTLLNALSAMAAFTAAGLWW) and 70–90 (AAKAAALAAACQGTAIALPIL).

It localises to the cell membrane. This is an uncharacterized protein from Sinorhizobium fredii (strain NBRC 101917 / NGR234).